Reading from the N-terminus, the 381-residue chain is Creatine kinase B-type (381 aa).

Phosphoserine is present on serine 4. In terms of domain architecture, Phosphagen kinase N-terminal spans 11-98 (KLRFPAEDEF…FDPIIEDRHG (88 aa)). Threonine 35 bears the Phosphothreonine mark. Residue lysine 45 forms a Glycyl lysine isopeptide (Lys-Gly) (interchain with G-Cter in ubiquitin) linkage. A creatine-binding site is contributed by valine 72. A compositionally biased stretch (basic and acidic residues) spans 96 to 110 (RHGGYKPSDEHKTDL). Positions 96-123 (RHGGYKPSDEHKTDLNPDNLQGGDDLDP) are disordered. Glycyl lysine isopeptide (Lys-Gly) (interchain with G-Cter in ubiquitin) cross-links involve residues lysine 101 and lysine 107. Tyrosine 125 bears the Phosphotyrosine mark. The 243-residue stretch at 125-367 (YVLSSRVRTG…KLLIEMEQRL (243 aa)) folds into the Phosphagen kinase C-terminal domain. Residues 128–132 (SSRVR), arginine 130, arginine 132, and histidine 191 each bind ATP. The internal MTS-like signal stretch occupies residues 130 to 138 (RVRTGRSIR). The residue at position 199 (serine 199) is a Phosphoserine. Residue glutamate 232 participates in creatine binding. An ATP-binding site is contributed by arginine 236. At tyrosine 269 the chain carries 3'-nitrotyrosine. A creatine-binding site is contributed by serine 285. Arginine 292 contributes to the ATP binding site. Serine 309 carries the phosphoserine modification. Residues arginine 320, 320–325 (RGTGGV), and aspartate 335 contribute to the ATP site. The residue at position 322 (threonine 322) is a Phosphothreonine. A Glycyl lysine isopeptide (Lys-Gly) (interchain with G-Cter in ubiquitin) cross-link involves residue lysine 381.

This sequence belongs to the ATP:guanido phosphotransferase family. As to quaternary structure, dimer of identical or non-identical chains, which can be either B (brain type) or M (muscle type). With MM being the major form in skeletal muscle and myocardium, MB existing in myocardium, and BB existing in many tissues, especially brain. Interacts with SLC12A6 (via C-terminus); the interaction may be required for SLC12A6 potassium-chloride cotransport activity. In terms of processing, ubiquitinated by the ECS(ASB9) complex, leading to its degradation by the proteasome.

The protein localises to the cytoplasm. The protein resides in the cytosol. It localises to the mitochondrion. Its subcellular location is the cell membrane. The catalysed reaction is creatine + ATP = N-phosphocreatine + ADP + H(+). Reversibly catalyzes the transfer of phosphate between ATP and various phosphogens (e.g. creatine phosphate). Creatine kinase isoenzymes play a central role in energy transduction in tissues with large, fluctuating energy demands, such as skeletal muscle, heart, brain and spermatozoa. Acts as a key regulator of adaptive thermogenesis as part of the futile creatine cycle: localizes to the mitochondria of thermogenic fat cells and acts by mediating phosphorylation of creatine to initiate a futile cycle of creatine phosphorylation and dephosphorylation. During the futile creatine cycle, creatine and N-phosphocreatine are in a futile cycle, which dissipates the high energy charge of N-phosphocreatine as heat without performing any mechanical or chemical work. The protein is Creatine kinase B-type (CKB) of Oryctolagus cuniculus (Rabbit).